The primary structure comprises 553 residues: ATP synthase subunit alpha (553 aa).

173–180 is an ATP binding site; the sequence is GDRQTGKT. Residues 527-553 are disordered; the sequence is EALDPSAVEREEIAVHHRKPSDETAGH. Positions 533 to 553 are enriched in basic and acidic residues; that stretch reads AVEREEIAVHHRKPSDETAGH.

The protein belongs to the ATPase alpha/beta chains family. In terms of assembly, F-type ATPases have 2 components, CF(1) - the catalytic core - and CF(0) - the membrane proton channel. CF(1) has five subunits: alpha(3), beta(3), gamma(1), delta(1), epsilon(1). CF(0) has three main subunits: a(1), b(2) and c(9-12). The alpha and beta chains form an alternating ring which encloses part of the gamma chain. CF(1) is attached to CF(0) by a central stalk formed by the gamma and epsilon chains, while a peripheral stalk is formed by the delta and b chains.

It is found in the cell membrane. The enzyme catalyses ATP + H2O + 4 H(+)(in) = ADP + phosphate + 5 H(+)(out). Its function is as follows. Produces ATP from ADP in the presence of a proton gradient across the membrane. The alpha chain is a regulatory subunit. The sequence is that of ATP synthase subunit alpha from Parafrankia sp. (strain EAN1pec).